The sequence spans 255 residues: Tumor necrosis factor receptor superfamily member 9 (255 aa).

Positions 1 to 23 (MGNSCYNIVATLLLVLNFERTRS) are cleaved as a signal peptide. 4 TNFR-Cys repeats span residues 24-45 (LQDP…NQIC), 47-86 (PCPP…NAEC), 87-118 (DCTP…KGCK), and 119-159 (DCCF…VVCG). The Extracellular segment spans residues 24–186 (LQDPCSNCPA…PAREPGHSPQ (163 aa)). 9 disulfide bridges follow: Cys28-Cys37, Cys31-Cys45, Cys48-Cys62, Cys65-Cys78, Cys68-Cys86, Cys88-Cys94, Cys99-Cys106, Cys102-Cys117, and Cys121-Cys133. Residues Asn138 and Asn149 are each glycosylated (N-linked (GlcNAc...) asparagine). An intrachain disulfide couples Cys139 to Cys158. A disordered region spans residues 161 to 180 (SPADLSPGASSVTPPAPARE). The helical transmembrane segment at 187-213 (IISFFLALTSTALLFLLFFLTLRFSVV) threads the bilayer. Residues 214-255 (KRGRKKLLYIFKQPFMRPVQTTQEEDGCSCRFPEEEEGGCEL) are Cytoplasmic-facing. Residues 214 to 255 (KRGRKKLLYIFKQPFMRPVQTTQEEDGCSCRFPEEEEGGCEL) are interaction with LRR-1.

In terms of assembly, predominantly homodimeric, but may also exist as a monomer. Interacts with TRAF1, TRAF2 and TRAF3. Interacts with LRR-repeat protein 1/LRR-1. In terms of tissue distribution, expressed on the surface of activated T-cells.

Its subcellular location is the cell membrane. Its function is as follows. Receptor for TNFSF9/4-1BBL. Conveys a signal that enhances CD8(+) T-cell survival, cytotoxicity, and mitochondrial activity, thereby promoting immunity against viruses and tumors. The polypeptide is Tumor necrosis factor receptor superfamily member 9 (TNFRSF9) (Homo sapiens (Human)).